A 199-amino-acid chain; its full sequence is MANETLRLALQPREITGKKVQSLRDQGILPIGICGRGIEPYSAQVDEREFNKVINQAGYSGLIELSIPGQKRQVAFLLEVQRNSVTNRIIHADLRVVDANAPVELDIHVALQGENDMVSRGNAVLNLVQSVIRVRALPGDVPHQIDIDASSLTEIGQQILVKDLSLPATVEILDDVETLILTLGYPQAEEAPAAETAAE.

Belongs to the bacterial ribosomal protein bL25 family. CTC subfamily. Part of the 50S ribosomal subunit; part of the 5S rRNA/L5/L18/L25 subcomplex. Contacts the 5S rRNA. Binds to the 5S rRNA independently of L5 and L18.

This is one of the proteins that binds to the 5S RNA in the ribosome where it forms part of the central protuberance. The chain is Large ribosomal subunit protein bL25 from Herpetosiphon aurantiacus (strain ATCC 23779 / DSM 785 / 114-95).